We begin with the raw amino-acid sequence, 756 residues long: Serine/threonine-protein kinase DCLK2 (756 aa).

The segment at M1–L44 is disordered. Basic and acidic residues predominate over residues I7–P19. A compositionally biased stretch (low complexity) spans R24 to G43. A Phosphothreonine modification is found at T61. 2 Doublecortin domains span residues K72–T158 and K196–D279. 2 stretches are compositionally biased toward low complexity: residues K301 to S311 and T323 to S346. The interval K301–P375 is disordered. Residues I353 to N364 are compositionally biased toward polar residues. Residue S361 is modified to Phosphoserine. One can recognise a Protein kinase domain in the interval Y393–V650. ATP contacts are provided by residues I399–V407 and K422. D514 (proton acceptor) is an active-site residue. Position 646 is a phosphoserine (S646). At T665 the chain carries Phosphothreonine. The interval Q707–D756 is disordered. The span at P719–P740 shows a compositional bias: pro residues.

Belongs to the protein kinase superfamily. CAMK Ser/Thr protein kinase family. CaMK subfamily. As to quaternary structure, binds to and stabilizes microtubules. Interacts with MAPK8IP1/JIP-1, MAPK8IP2/JIP-2, MAPK9/JNK2, PPP1R9B/NEURABIN-2 and actin. In terms of processing, autophosphorylated. In terms of tissue distribution, expressed in the central and peripheral nervous system including the brain, spinal cord, cranial and dorsal root ganglia and in the parasympathetic ganglia. Present in neurons, but not in glial cells, in most forebrain areas. Strong expression in the hippocampal CA1 pyramidal cell layer. Expressed in the photoreceptor sensory cilium complex and in eyes. Also detected in individual cells of the olfactory epithelium.

It localises to the cytoplasm. Its subcellular location is the cytoskeleton. The enzyme catalyses L-seryl-[protein] + ATP = O-phospho-L-seryl-[protein] + ADP + H(+). The catalysed reaction is L-threonyl-[protein] + ATP = O-phospho-L-threonyl-[protein] + ADP + H(+). In terms of biological role, protein kinase with a significantly reduced Ca(2+)+/CAM affinity and dependence compared to other members of the CaMK family. May play a role in the down-regulation of CRE-dependent gene activation probably by phosphorylation of the CREB coactivator CRTC2/TORC2 and the resulting retention of TORC2 in the cytoplasm. This chain is Serine/threonine-protein kinase DCLK2 (Dclk2), found in Mus musculus (Mouse).